A 282-amino-acid chain; its full sequence is HTH-type transcriptional activator RhaR (282 aa).

The HTH araC/xylS-type domain maps to 179 to 277; the sequence is DKLITALANS…GMTPSQWRHL (99 aa). DNA-binding regions (H-T-H motif) lie at residues 196 to 217 and 244 to 267; these read DAFCQQEQCSERVLRQQFRAQT and VSEISMQCGFEDSNYFSVVFTRET.

Binds DNA as a dimer.

The protein localises to the cytoplasm. In terms of biological role, activates expression of the rhaSR operon in response to L-rhamnose. This is HTH-type transcriptional activator RhaR from Salmonella choleraesuis (strain SC-B67).